The following is a 486-amino-acid chain: Transmembrane protein 39A (486 aa).

Residue Asn31 is glycosylated (N-linked (GlcNAc...) asparagine). 8 helical membrane passes run Ser72 to Ile92, Thr110 to Ala130, Leu155 to Val175, Ser182 to Phe202, Glu285 to Val305, Cys317 to Pro337, Val418 to Leu438, and Asn444 to Leu464.

The protein belongs to the TMEM39 family. Interacts with SACM1L, SEC23A and SEC24A.

It localises to the endoplasmic reticulum membrane. In terms of biological role, regulates autophagy by controlling the spatial distribution and levels of the intracellular phosphatidylinositol 4-phosphate (PtdIns(4)P) pools. Modulates (PtdIns(4)P) levels by regulating the ER-to-Golgi trafficking of the phosphatidylinositide phosphatase SACM1L. The protein is Transmembrane protein 39A (Tmem39a) of Mus musculus (Mouse).